The primary structure comprises 278 residues: MALKSYNPTSPGQRGLILVDKSALWKGKPVKALTEGKRKTGGRNNKGHVTSRGIAGGHKQKYRFIDFKRRKWDVPATVERLEYDPNRTAFIALVKYEDGELAYILAPQRLAVGDTIVAGKKTDVKPGNAMELAQMPVGTIVHNIEMKPGKGGQIARSAGTYAQVVGRDRGLVIVRLGSGEQRYIRGECMGTVGAVSNPDNQNTNLGKAGRNRWLGKRPLTRGVAKNPVDHPHGGGEGRTSGGRHPVTPWGKPTKGARTRHNKSTDKMIIRSRHAKKKR.

2 disordered regions span residues 33–53 (LTEG…TSRG) and 219–278 (LTRG…KKKR). Basic residues predominate over residues 269-278 (IRSRHAKKKR).

This sequence belongs to the universal ribosomal protein uL2 family. Part of the 50S ribosomal subunit. Forms a bridge to the 30S subunit in the 70S ribosome.

Functionally, one of the primary rRNA binding proteins. Required for association of the 30S and 50S subunits to form the 70S ribosome, for tRNA binding and peptide bond formation. It has been suggested to have peptidyltransferase activity; this is somewhat controversial. Makes several contacts with the 16S rRNA in the 70S ribosome. This chain is Large ribosomal subunit protein uL2, found in Sphingopyxis alaskensis (strain DSM 13593 / LMG 18877 / RB2256) (Sphingomonas alaskensis).